We begin with the raw amino-acid sequence, 346 residues long: D-alanine--D-alanine ligase (346 aa).

The ATP-grasp domain occupies 133–327; sequence KLYAKSVGVK…ALADQISLEK (195 aa). ATP is bound at residue 159–211; it reads LSFPCIIKPARLGSSIGISIVKDEKDLEYAKDVGFEFDNDLVVEEFKNNIKEY. Residues D284, E296, and N298 each coordinate Mg(2+).

This sequence belongs to the D-alanine--D-alanine ligase family. The cofactor is Mg(2+). Mn(2+) serves as cofactor.

Its subcellular location is the cytoplasm. The catalysed reaction is 2 D-alanine + ATP = D-alanyl-D-alanine + ADP + phosphate + H(+). It participates in cell wall biogenesis; peptidoglycan biosynthesis. Functionally, cell wall formation. In Campylobacter jejuni subsp. jejuni serotype O:2 (strain ATCC 700819 / NCTC 11168), this protein is D-alanine--D-alanine ligase.